The following is a 159-amino-acid chain: Ribosomal RNA large subunit methyltransferase H (159 aa).

Residues Leu-76, Gly-108, and 127-132 (FSKMTF) contribute to the S-adenosyl-L-methionine site.

This sequence belongs to the RNA methyltransferase RlmH family. Homodimer.

It is found in the cytoplasm. It carries out the reaction pseudouridine(1915) in 23S rRNA + S-adenosyl-L-methionine = N(3)-methylpseudouridine(1915) in 23S rRNA + S-adenosyl-L-homocysteine + H(+). Specifically methylates the pseudouridine at position 1915 (m3Psi1915) in 23S rRNA. The protein is Ribosomal RNA large subunit methyltransferase H of Exiguobacterium sibiricum (strain DSM 17290 / CCUG 55495 / CIP 109462 / JCM 13490 / 255-15).